Consider the following 250-residue polypeptide: Probable dihydroorotate dehydrogenase B (NAD(+)), electron transfer subunit (250 aa).

An FAD-binding FR-type domain is found at 1–89; that stretch reads MINLKIEENV…RGPYGNGFDV (89 aa). Residues cysteine 200, cysteine 205, cysteine 208, and cysteine 216 each contribute to the [2Fe-2S] cluster site.

Belongs to the PyrK family. As to quaternary structure, heterotetramer of 2 PyrK and 2 PyrD type B subunits. It depends on [2Fe-2S] cluster as a cofactor. FAD is required as a cofactor.

It participates in pyrimidine metabolism; UMP biosynthesis via de novo pathway; orotate from (S)-dihydroorotate (NAD(+) route): step 1/1. In terms of biological role, responsible for channeling the electrons from the oxidation of dihydroorotate from the FMN redox center in the PyrD type B subunit to the ultimate electron acceptor NAD(+). The protein is Probable dihydroorotate dehydrogenase B (NAD(+)), electron transfer subunit of Thermoplasma volcanium (strain ATCC 51530 / DSM 4299 / JCM 9571 / NBRC 15438 / GSS1).